A 341-amino-acid polypeptide reads, in one-letter code: DNA-directed RNA polymerase subunit alpha (341 aa).

The tract at residues 1 to 233 (MIQDEVPVSA…DLFLPFLHTE (233 aa)) is alpha N-terminal domain (alpha-NTD). The tract at residues 262–341 (DRMAKEVAFK…NLPRNKFSID (80 aa)) is alpha C-terminal domain (alpha-CTD).

It belongs to the RNA polymerase alpha chain family. As to quaternary structure, in plastids the minimal PEP RNA polymerase catalytic core is composed of four subunits: alpha, beta, beta', and beta''. When a (nuclear-encoded) sigma factor is associated with the core the holoenzyme is formed, which can initiate transcription.

It localises to the plastid. It is found in the chloroplast. The catalysed reaction is RNA(n) + a ribonucleoside 5'-triphosphate = RNA(n+1) + diphosphate. DNA-dependent RNA polymerase catalyzes the transcription of DNA into RNA using the four ribonucleoside triphosphates as substrates. This Angiopteris evecta (Mule's foot fern) protein is DNA-directed RNA polymerase subunit alpha.